Consider the following 169-residue polypeptide: uncharacterized protein (169 aa).

It localises to the mitochondrion. This is an uncharacterized protein from Marchantia polymorpha (Common liverwort).